A 206-amino-acid chain; its full sequence is MALCGSSKGRGRGRPIQRKVVVCGDGACGKTSLLNVFTRGFFTQVYEPTVFENYVHDLYIDDQLVELSLWDTAGQEEFDRLRSLSYAETHVIMICFSVDNPTSLENVESKWLDEILEYCPGVKLVLVDSKCDLRDDPAVLDRLQRYGTHTDQYEEGLGVARRIRASRYLECSSKHNRGVNEVFLRGRARVTVHSIRQGSAGSCCVM.

24–31 (GDGACGKT) contributes to the GTP binding site. An Effector region motif is present at residues 46 to 54 (YEPTVFENY). GTP contacts are provided by residues 71–75 (DTAGQ) and 129–132 (SKCD). C203 bears the Cysteine methyl ester mark. The S-geranylgeranyl cysteine moiety is linked to residue C203. The propeptide at 204 to 206 (CVM) is removed in mature form.

The protein belongs to the small GTPase superfamily. Rho family.

It localises to the cell membrane. This is GTP-binding protein Rho3 (RHO3) from Schizophyllum commune (Split gill fungus).